Reading from the N-terminus, the 118-residue chain is Large ribosomal subunit protein bL20 (118 aa).

Belongs to the bacterial ribosomal protein bL20 family.

Its function is as follows. Binds directly to 23S ribosomal RNA and is necessary for the in vitro assembly process of the 50S ribosomal subunit. It is not involved in the protein synthesizing functions of that subunit. The protein is Large ribosomal subunit protein bL20 of Phenylobacterium zucineum (strain HLK1).